Reading from the N-terminus, the 311-residue chain is Dehydrogenase/reductase SDR family member 7C (311 aa).

Residues 1–18 form the signal peptide; it reads MGLMAVLMLPLLLLGISG. Residues serine 47, leucine 49, tyrosine 191, lysine 195, and serine 226 each coordinate NAD(+). Tyrosine 191 functions as the Proton acceptor in the catalytic mechanism.

It belongs to the short-chain dehydrogenases/reductases (SDR) family. In terms of tissue distribution, expressed in skeletal muscle and cardiac muscle. Also expressed in liver, kidney, adipocytes and skin.

Its subcellular location is the sarcoplasmic reticulum membrane. The catalysed reaction is all-trans-retinol + NAD(+) = all-trans-retinal + NADH + H(+). NADH-dependent oxidoreductase which catalyzes the oxidation of all-trans-retinol to all-trans-retinal. Plays a role in the regulation of cardiac and skeletal muscle metabolic functions. Maintains Ca(2+) intracellular homeostasis by repressing Ca(2+) release from the sarcoplasmic reticulum (SR) in myotubes, possibly through local alternations in NAD/NADH or retinol/retinal. Also plays a role in Ca(2+) homeostasis by controlling Ca(2+) overload in the cytosol and the SR in myotubes. Involved in glucose uptake into skeletal muscles and muscle performance by activating PI3K and mTORC2-mediated AKT1 phosphorylation signaling pathways, possibly through the action of its downstream catalytic product all-trans-retinoic acid. This Mus musculus (Mouse) protein is Dehydrogenase/reductase SDR family member 7C.